The following is a 98-amino-acid chain: Beta-elicitin MGM-beta (98 aa).

3 disulfides stabilise this stretch: cysteine 3–cysteine 71, cysteine 27–cysteine 56, and cysteine 51–cysteine 95.

Belongs to the elicitin family.

The protein resides in the secreted. Functionally, induces local and distal defense responses (incompatible hypersensitive reaction) in plants from the solanaceae and cruciferae families. Elicits leaf necrosis and causes the accumulation of pathogenesis-related proteins. Might interact with the lipidic molecules of the plasma membrane. The protein is Beta-elicitin MGM-beta of Phytophthora megasperma (Potato pink rot fungus).